A 61-amino-acid polypeptide reads, in one-letter code: Small ribosomal subunit protein uS14 (61 aa).

Zn(2+) is bound by residues C24, C27, C40, and C43.

It belongs to the universal ribosomal protein uS14 family. Zinc-binding uS14 subfamily. Part of the 30S ribosomal subunit. Contacts proteins S3 and S10. Requires Zn(2+) as cofactor.

Functionally, binds 16S rRNA, required for the assembly of 30S particles and may also be responsible for determining the conformation of the 16S rRNA at the A site. This Deinococcus deserti (strain DSM 17065 / CIP 109153 / LMG 22923 / VCD115) protein is Small ribosomal subunit protein uS14.